Here is a 228-residue protein sequence, read N- to C-terminus: Venom allergen 5 (228 aa).

Residues 1-22 (MTKIDLLARVFVIATIIALATA) form the signal peptide. Intrachain disulfides connect cysteine 30/cysteine 124, cysteine 51/cysteine 117, and cysteine 195/cysteine 212. An SCP domain is found at 69–214 (KEHNDYGHKV…WNKHFLVCNY (146 aa)).

The protein belongs to the CRISP family. Venom allergen 5-like subfamily. Expressed by the venom gland.

Its subcellular location is the secreted. This chain is Venom allergen 5, found in Rhynchium brunneum (Potter wasp).